The following is a 55-amino-acid chain: uncharacterized protein (55 aa).

Polar residues predominate over residues 1–15 (MVGQEQLESSPLCQH). Positions 1-26 (MVGQEQLESSPLCQHSDNETETKREC) are disordered. Basic and acidic residues predominate over residues 16-26 (SDNETETKREC).

This is an uncharacterized protein from Escherichia coli (strain K12).